A 269-amino-acid chain; its full sequence is Thiazole synthase (269 aa).

The active-site Schiff-base intermediate with DXP is the Lys109. 1-deoxy-D-xylulose 5-phosphate is bound by residues Gly170, 196 to 197 (AG), and 218 to 219 (NT).

Belongs to the ThiG family. Homotetramer. Forms heterodimers with either ThiH or ThiS.

The protein localises to the plastid. It is found in the chloroplast. The catalysed reaction is [ThiS sulfur-carrier protein]-C-terminal-Gly-aminoethanethioate + 2-iminoacetate + 1-deoxy-D-xylulose 5-phosphate = [ThiS sulfur-carrier protein]-C-terminal Gly-Gly + 2-[(2R,5Z)-2-carboxy-4-methylthiazol-5(2H)-ylidene]ethyl phosphate + 2 H2O + H(+). It functions in the pathway cofactor biosynthesis; thiamine diphosphate biosynthesis. Functionally, catalyzes the rearrangement of 1-deoxy-D-xylulose 5-phosphate (DXP) to produce the thiazole phosphate moiety of thiamine. Sulfur is provided by the thiocarboxylate moiety of the carrier protein ThiS. In vitro, sulfur can be provided by H(2)S. The sequence is that of Thiazole synthase from Phaeodactylum tricornutum (strain CCAP 1055/1).